We begin with the raw amino-acid sequence, 287 residues long: MSATQTAQLMDGTGHARRIVEEAAAKAAEISQRTGTAPCLATVLVGDDPASVTYVRMKRARCAKAGIRSRHIALPATTTTAELIDSLSGLSGDPEVHGILLQHPCGPHIDERAAFEAIAPAKDVDGVTMHSFAAMSFGLPGFVSCTPGGIMRLLEAYDVDLAGKHAVVVGRSAILGKPVGMLLLAKDATVTYCHSRTADLSAMVREADVVVAAVGRPRLIRGEDIKPGAVVIDAGYNPGNVGDVDFDAVLTRARLITPVPGGVGPMTIAVLLEQTVDAAANQLGVQQ.

Residues 170 to 172 (GRS) and S195 contribute to the NADP(+) site.

The protein belongs to the tetrahydrofolate dehydrogenase/cyclohydrolase family. As to quaternary structure, homodimer.

The enzyme catalyses (6R)-5,10-methylene-5,6,7,8-tetrahydrofolate + NADP(+) = (6R)-5,10-methenyltetrahydrofolate + NADPH. It catalyses the reaction (6R)-5,10-methenyltetrahydrofolate + H2O = (6R)-10-formyltetrahydrofolate + H(+). Its pathway is one-carbon metabolism; tetrahydrofolate interconversion. In terms of biological role, catalyzes the oxidation of 5,10-methylenetetrahydrofolate to 5,10-methenyltetrahydrofolate and then the hydrolysis of 5,10-methenyltetrahydrofolate to 10-formyltetrahydrofolate. This Streptomyces avermitilis (strain ATCC 31267 / DSM 46492 / JCM 5070 / NBRC 14893 / NCIMB 12804 / NRRL 8165 / MA-4680) protein is Bifunctional protein FolD 1.